The following is a 150-amino-acid chain: 3-hydroxyacyl-[acyl-carrier-protein] dehydratase FabZ (150 aa).

The active site involves His51.

This sequence belongs to the thioester dehydratase family. FabZ subfamily.

Its subcellular location is the cytoplasm. It carries out the reaction a (3R)-hydroxyacyl-[ACP] = a (2E)-enoyl-[ACP] + H2O. Functionally, involved in unsaturated fatty acids biosynthesis. Catalyzes the dehydration of short chain beta-hydroxyacyl-ACPs and long chain saturated and unsaturated beta-hydroxyacyl-ACPs. The chain is 3-hydroxyacyl-[acyl-carrier-protein] dehydratase FabZ from Rubrobacter xylanophilus (strain DSM 9941 / JCM 11954 / NBRC 16129 / PRD-1).